Reading from the N-terminus, the 157-residue chain is Eukaryotic translation initiation factor 5A-1 (157 aa).

The residue at position 52 (Lys-52) is a Hypusine. Phosphoserine occurs at positions 75 and 77. Residue Thr-78 is modified to Phosphothreonine.

This sequence belongs to the eIF-5A family. Lys-52 undergoes hypusination, a unique post-translational modification that consists in the addition of a butylamino group from spermidine to lysine side chain, leading to the formation of the unusual amino acid hypusine. eIF-5As are the only known proteins to undergo this modification, which is essential for their function.

The protein localises to the cytoplasm. Its function is as follows. Translation factor that promotes translation elongation and termination, particularly upon ribosome stalling at specific amino acid sequence contexts. Binds between the exit (E) and peptidyl (P) site of the ribosome and promotes rescue of stalled ribosome: specifically required for efficient translation of polyproline-containing peptides as well as other motifs that stall the ribosome. Acts as a ribosome quality control (RQC) cofactor by joining the RQC complex to facilitate peptidyl transfer during CAT tailing step. The chain is Eukaryotic translation initiation factor 5A-1 (tif51a) from Schizosaccharomyces pombe (strain 972 / ATCC 24843) (Fission yeast).